The following is a 473-amino-acid chain: ATP synthase subunit beta (473 aa).

158–165 serves as a coordination point for ATP; that stretch reads GGAGVGKT.

Belongs to the ATPase alpha/beta chains family. As to quaternary structure, F-type ATPases have 2 components, CF(1) - the catalytic core - and CF(0) - the membrane proton channel. CF(1) has five subunits: alpha(3), beta(3), gamma(1), delta(1), epsilon(1). CF(0) has three main subunits: a(1), b(2) and c(9-12). The alpha and beta chains form an alternating ring which encloses part of the gamma chain. CF(1) is attached to CF(0) by a central stalk formed by the gamma and epsilon chains, while a peripheral stalk is formed by the delta and b chains.

The protein localises to the cell membrane. The enzyme catalyses ATP + H2O + 4 H(+)(in) = ADP + phosphate + 5 H(+)(out). Functionally, produces ATP from ADP in the presence of a proton gradient across the membrane. The catalytic sites are hosted primarily by the beta subunits. This is ATP synthase subunit beta from Geobacillus stearothermophilus (Bacillus stearothermophilus).